The chain runs to 277 residues: MGIRKHKPTTPGRRGSSVSDFAEITRSEPEKSLLRPLHGRGGRNAHGKITTRHKGGGHKRAYRLIDFRRNDKDGVPAKVAHIEYDPNRSARIALLHYADGEKRYIIAPNNVRQGDRIESGARADIKPGNNLPLRNIPTGTVVHAIELRPGGGAKIARSAGARVQLVAKDGPYAQLRMPSGEIRNVDARCRATVGEVGNSEHANINWGKAGRMRWKGKRPTVRGVVMNPVDHPHGGGEGKTSGGRHPVNPKGKPEGRTRRNKPSDKLIVRRRRTGKKR.

2 disordered regions span residues Met-1 to His-58 and Gly-223 to Arg-277. A compositionally biased stretch (basic and acidic residues) spans Glu-23–Leu-33. Over residues Leu-37 to His-58 the composition is skewed to basic residues. Residues Gly-251 to Ile-267 are compositionally biased toward basic and acidic residues. Residues Val-268–Arg-277 show a composition bias toward basic residues.

Belongs to the universal ribosomal protein uL2 family. In terms of assembly, part of the 50S ribosomal subunit. Forms a bridge to the 30S subunit in the 70S ribosome.

Functionally, one of the primary rRNA binding proteins. Required for association of the 30S and 50S subunits to form the 70S ribosome, for tRNA binding and peptide bond formation. It has been suggested to have peptidyltransferase activity; this is somewhat controversial. Makes several contacts with the 16S rRNA in the 70S ribosome. In Saccharopolyspora erythraea (strain ATCC 11635 / DSM 40517 / JCM 4748 / NBRC 13426 / NCIMB 8594 / NRRL 2338), this protein is Large ribosomal subunit protein uL2.